The sequence spans 164 residues: Telomerase-associated protein of 19 kDa (164 aa).

Component of the telomerase holoenzyme complex, composed of the catalytic core (the catalytic subunit TERT, the telomerase RNA template component TER and TAP65/p65), which is associated with two heterotrimeric subcomplexes: (i) the replication protein A (RPA)-related subcomplex, composed of TEB1, RPA2/TEB2 and RPA3/TEB3 and (ii) the CST-like subcomplex, composed of TAP75/p75, TAP45/p45 and TAP19/p19. TEB1 and the CST-like subcomplex are tethered to the catalytic core by TAP50/p50.

It is found in the chromosome. It localises to the telomere. In terms of biological role, component of a CST-like subcomplex of the holoenzyme telomerase ribonucleoprotein complex, which stimulates telomerase complementary-strand synthesis. Telomerase is an essential ribonucleoprotein enzyme that copies new telomeric repeats onto chromosome ends by repetitively synthesizing the short telomere-repeat sequence 5'-TTGGGG-3' using an RNA template component TER. The CST-like subcomplex (also named 7-4-1) binds telomeric single-stranded DNA and coordinates telomere G-strand and C-strand synthesis. The chain is Telomerase-associated protein of 19 kDa from Tetrahymena thermophila (strain SB210).